A 493-amino-acid chain; its full sequence is Xaa-Pro dipeptidase (493 aa).

Residue Ala-2 is modified to N-acetylalanine. Residue Ser-167 is modified to Phosphoserine. His-255 is an a dipeptide binding site. The Mn(2+) site is built by Asp-276, Asp-287, and His-370. Asp-287 is a binding site for a dipeptide. His-377 and Arg-398 together coordinate a dipeptide. Mn(2+)-binding residues include Glu-412 and Glu-452.

This sequence belongs to the peptidase M24B family. Eukaryotic-type prolidase subfamily. Homodimer. Requires Mn(2+) as cofactor.

It carries out the reaction Xaa-L-Pro dipeptide + H2O = an L-alpha-amino acid + L-proline. In terms of biological role, dipeptidase that catalyzes the hydrolysis of dipeptides with a prolyl (Xaa-Pro) or hydroxyprolyl residue in the C-terminal position. The preferred dipeptide substrate is Gly-Pro, but other Xaa-Pro dipeptides, such as Ala-Pro, Met-Pro, Phe-Pro, Val-Pro and Leu-Pro, can be cleaved. Plays an important role in collagen metabolism because the high level of iminoacids in collagen. In Mus musculus (Mouse), this protein is Xaa-Pro dipeptidase (Pepd).